We begin with the raw amino-acid sequence, 312 residues long: Probable rRNA-processing protein EBP2 (312 aa).

Residues Met1 to Gln32 are disordered. Positions Ser8 to Glu20 are enriched in acidic residues. A coiled-coil region spans residues Glu140–Lys176. Residues Leu211 to Arg312 are disordered. The segment covering Lys282–Arg312 has biased composition (basic residues).

Belongs to the EBP2 family.

The protein localises to the nucleus. It localises to the nucleolus. Functionally, required for the processing of the 27S pre-rRNA. The protein is Probable rRNA-processing protein EBP2 (ebna1bp2) of Xenopus laevis (African clawed frog).